We begin with the raw amino-acid sequence, 184 residues long: Ribosome-recycling factor (184 aa).

Belongs to the RRF family.

The protein resides in the cytoplasm. Its function is as follows. Responsible for the release of ribosomes from messenger RNA at the termination of protein biosynthesis. May increase the efficiency of translation by recycling ribosomes from one round of translation to another. This chain is Ribosome-recycling factor, found in Acinetobacter baumannii (strain SDF).